The chain runs to 203 residues: A-type ATP synthase subunit E (203 aa).

The protein belongs to the V-ATPase E subunit family. In terms of assembly, has multiple subunits with at least A(3), B(3), C, D, E, F, H, I and proteolipid K(x).

It is found in the cell membrane. Component of the A-type ATP synthase that produces ATP from ADP in the presence of a proton gradient across the membrane. The sequence is that of A-type ATP synthase subunit E from Methanococcus maripaludis (strain C6 / ATCC BAA-1332).